A 922-amino-acid polypeptide reads, in one-letter code: MSSPIRNRLQLVVTLIFCLFFENVNGLNNFIDNFETLNYRATHVANQVTRRKRSIDSAASHYQEPIGFRFNAYNRTFHVQLHPIDDSLFHEDHMSDVDGGYADIKPSHFLYEGYLKDDPNSHVHGSVFDGVFEGHIQTGEGRRYSIDKAAKYFERDDRPTQYHSIIYRDDEINHRKWRVKRDAENLSEQMQGCGFSSRVRREMTDVQNSGESTDFFTNYMTMGGRSKRANTLRDHDGLYFVRTCSLYMQADHKLYEHIRMKEGNNDPIRTREEIVSLFYNHIKAVNEIYEGTNFNGIKGLHFVIQRTSIYTPDSCDRGRAKTDSDNPFCEENVDVSNFLNLNSQRNHSAFCLAYALTFRDFVGGTLGLAWVASPQFNTAGGICQVHQRYNEGSRGWVYRSLNTGIVTLVNYGNRVPARVSQLTLAHEIGHNFGSPHDFPAECQPGLPDGNFIMFASATSGDKPNNGKFSPCSVKNISAVLAVVLKSMPVDPTRNASPVGIGKRNCFQERTSAFCGNQIYEPGEECDCGFSQADCDQMGDKCCVPHEARGNGGPGPCKRKPGAQCSPSQGYCCNPDTCSLHGKNEEKICRQESECSNLQTCDGRNAQCPVSPPKHDGIPCQDSTKVCSSGQCNGSVCAMFGLEDCFLTEGKADELCFLACIKDGKCTSSVHLPEFSANRTNFLQNMRKDKPGLILHPGSPCNNYKGYCDIFRKCRSVDANGPLARLKNLLFNKRTIETLTQWAQDNWWVVGVGGLVFLVIMALFVKCCAVHTPSTNPNKPPALNIYQTLTRPGTLIRQHRQRHRAAAGSVPPGPGAQPRSGAASAPSRTTPSARPSAPPLVAPQVAVAVPPGVVGPPIPLIATHPGSSSSTPAVIVLEPPPPYTAADPGSAMGGPRRGHRKNKRQTSSDAAGSSGNGGKKKGK.

Residues 1–26 (MSSPIRNRLQLVVTLIFCLFFENVNG) form the signal peptide. A propeptide spanning residues 27 to 228 (LNNFIDNFET…YMTMGGRSKR (202 aa)) is cleaved from the precursor. Asn74, Asn185, and Asn346 each carry an N-linked (GlcNAc...) asparagine glycan. The Extracellular portion of the chain corresponds to 229 to 745 (ANTLRDHDGL…ETLTQWAQDN (517 aa)). The 239-residue stretch at 242-480 (RTCSLYMQAD…CSVKNISAVL (239 aa)) folds into the Peptidase M12B domain. Residue His426 coordinates Zn(2+). Residue Glu427 is part of the active site. Positions 430 and 436 each coordinate Zn(2+). A disulfide bridge connects residues Cys442 and Cys471. N-linked (GlcNAc...) asparagine glycosylation occurs at Asn475. Positions 511–615 (SAFCGNQIYE…QCPVSPPKHD (105 aa)) constitute a Disintegrin domain. Cystine bridges form between Cys542–Cys577, Cys564–Cys572, Cys588–Cys607, Cys594–Cys626, and Cys619–Cys631. Asn632 carries N-linked (GlcNAc...) asparagine glycosylation. 4 disulfides stabilise this stretch: Cys636-Cys659, Cys644-Cys665, Cys655-Cys707, and Cys700-Cys713. N-linked (GlcNAc...) asparagine glycosylation is present at Asn677. Residues 746 to 766 (WWVVGVGGLVFLVIMALFVKC) form a helical membrane-spanning segment. Topologically, residues 767-922 (CAVHTPSTNP…SGNGGKKKGK (156 aa)) are cytoplasmic. Disordered regions lie at residues 797–837 (QHRQ…PSAP) and 864–922 (PGSS…KKGK). Residues 805 to 834 (AAGSVPPGPGAQPRSGAASAPSRTTPSARP) are compositionally biased toward low complexity.

May interact with tetraspanin tsp-12; the interaction promotes sup-17 cell membrane localization. It depends on Zn(2+) as a cofactor. Expressed in the germline.

It localises to the cell membrane. Its subcellular location is the basolateral cell membrane. The protein localises to the cytoplasmic vesicle membrane. It catalyses the reaction Endopeptidase of broad specificity.. In terms of biological role, metalloprotease. Acts together with protease adm-4 and in a cell autonomous manner to facilitate lin-12/Notch signaling during developmental cell fate decision, including anchor cell/ventral uterine precursor cell decision and vulva precursor cell specification. By modulating glp-1/Notch signaling, plays a role in germline development. Probably by modulating BMP-like Sma/Mab signaling via the shedding of unc-40 ectodomain, involved in the regulation of body size and mesoderm development. Probably by shedding ephrin efn-4, regulates axon guidance of SDQL neuron during development. The polypeptide is Disintegrin and metalloproteinase domain-containing protein 10 homolog (Caenorhabditis elegans).